Consider the following 361-residue polypeptide: D-alanine--D-alanine ligase (361 aa).

An ATP-grasp domain is found at K134–N344. Residue R167–E222 participates in ATP binding. Mg(2+)-binding residues include D297, E311, and N313.

This sequence belongs to the D-alanine--D-alanine ligase family. The cofactor is Mg(2+). Mn(2+) serves as cofactor.

Its subcellular location is the cytoplasm. The enzyme catalyses 2 D-alanine + ATP = D-alanyl-D-alanine + ADP + phosphate + H(+). The protein operates within cell wall biogenesis; peptidoglycan biosynthesis. In terms of biological role, cell wall formation. In Borrelia garinii subsp. bavariensis (strain ATCC BAA-2496 / DSM 23469 / PBi) (Borreliella bavariensis), this protein is D-alanine--D-alanine ligase.